A 715-amino-acid chain; its full sequence is ATP-dependent zinc metalloprotease YME1L1 (715 aa).

Residues 1 to 237 (MFSLSSTVQP…TNDSLRRTRL (237 aa)) lie on the Mitochondrial matrix side of the membrane. The interval 34 to 54 (NTPVSQKQHRDTVPEHEAPSS) is disordered. Positions 41–52 (QHRDTVPEHEAP) are enriched in basic and acidic residues. Residues 238-258 (ILFVLLLFGIYGLLKNPFLSV) form a helical membrane-spanning segment. Topologically, residues 259–715 (RFRTTTGLDS…VLEGKKLEVR (457 aa)) are mitochondrial intermembrane. ATP is bound by residues V283, T325, G326, K327, T328, and L329. H541 provides a ligand contact to Zn(2+). Residue E542 is part of the active site. Zn(2+) is bound by residues H545 and D619.

The protein in the N-terminal section; belongs to the AAA ATPase family. It in the C-terminal section; belongs to the peptidase M41 family. In terms of assembly, homohexamer; may also form heterohexamers. Exists in several complexes of 600-1100 kDa. Interacts with AFG1L. Zn(2+) is required as a cofactor. Post-translationally, proteolytically processed by mitochondrial processing peptidase (MPP) to generate the mature form. Degraded in an OMA1-dependent manner in response to oxidative stress. In terms of tissue distribution, detected in heart and skeletal muscle (at protein level).

The protein localises to the mitochondrion inner membrane. The protein resides in the mitochondrion. It catalyses the reaction ATP + H2O = ADP + phosphate + H(+). ATP-dependent metalloprotease that catalyzes the degradation of folded and unfolded proteins with a suitable degron sequence in the mitochondrial intermembrane region. Plays an important role in regulating mitochondrial morphology and function by cleaving OPA1 at position S2, giving rise to a form of OPA1 that promotes maintenance of normal mitochondrial structure and mitochondrial protein metabolism. Ensures cell proliferation, maintains normal cristae morphology and complex I respiration activity, promotes antiapoptotic activity and protects mitochondria from the accumulation of oxidatively damaged membrane proteins. Required to control the accumulation of nonassembled respiratory chain subunits (NDUFB6, OX4 and ND1). Involved in the mitochondrial adaptation in response to various signals, such as stress or developmental cues, by mediating degradation of mitochondrial proteins to rewire the mitochondrial proteome. Catalyzes degradation of mitochondrial proteins, such as translocases, lipid transfer proteins and metabolic enzymes in response to nutrient starvation in order to limit mitochondrial biogenesis: mechanistically, YME1L is activated by decreased phosphatidylethanolamine levels caused by LPIN1 activity in response to mTORC1 inhibition. Acts as a regulator of adult neural stem cell self-renewal by promoting mitochondrial proteome rewiring, preserving neural stem and progenitor cells self-renewal. Required for normal, constitutive degradation of PRELID1. Catalyzes the degradation of OMA1 in response to membrane depolarization. Mediates degradation of TIMM17A downstream of the integrated stress response (ISR). Catalyzes degradation of MICU1 when MICU1 is not assembled via an interchain disulfide. This chain is ATP-dependent zinc metalloprotease YME1L1 (Yme1l1), found in Mus musculus (Mouse).